Consider the following 709-residue polypeptide: Polyribonucleotide nucleotidyltransferase (709 aa).

2 residues coordinate Mg(2+): Asp-482 and Asp-488. The 60-residue stretch at 549–608 folds into the KH domain; sequence PRIITMSIDPDKIREVIGPGGKVINKIIAETGVKIDIEDDGRIFIAATDTEAANKAVRII. Residues 618 to 686 enclose the S1 motif domain; sequence GKVYTGKVTR…KQGRINLSRK (69 aa).

It belongs to the polyribonucleotide nucleotidyltransferase family. The cofactor is Mg(2+).

It is found in the cytoplasm. The enzyme catalyses RNA(n+1) + phosphate = RNA(n) + a ribonucleoside 5'-diphosphate. In terms of biological role, involved in mRNA degradation. Catalyzes the phosphorolysis of single-stranded polyribonucleotides processively in the 3'- to 5'-direction. The polypeptide is Polyribonucleotide nucleotidyltransferase (Heliobacterium modesticaldum (strain ATCC 51547 / Ice1)).